We begin with the raw amino-acid sequence, 530 residues long: MDLGVRVSGHETVSSPGQTELGSGFSNKQERSGFDGEDCWRSSKLSRTSTDGFSSSPASAKTLSFHQGIPLLRSTTINDPRKGQEHMLSFSSASGKSDVSPYLQYCRNSGYGLGGMMNTSNMHGNLLTGVKGPFSLTQWAELEQQALIYKYITANVPVPSSLLLSLKKSFFPYGSLPPNSFGWGSFHLGFSGGNMDPEPGRCRRTDGKKWRCSRDAVPDQKYCERHINRGRHRSRKPVEGQNGHNTNAAAAASAAAASTAAAVSKAAAGTSAVAMRGSDNNNSLAAAVGTQHHTNNQSTDSLANRVQNSRGASVFPATMNLQSKETHPKQSNNPFEFGLISSDSLLNPSHKQASYATSSKGFGSYLDFGNQAKHAGNHNNVDSWPEELKSDWTQLSMSIPMAPSSPVQDKLALSPLRLSREFDPAIHMGLGVNTEFLDPGKKTNNWIPISWGNNNSMGGPLGEVLNSTTNSPKFGSSPTGVLQKSTFGSLSNSSSASSTIIGDNNNKNGDGKDPLGPTTLMNTSATAPSL.

Residues 1 to 41 (MDLGVRVSGHETVSSPGQTELGSGFSNKQERSGFDGEDCWR) are disordered. Polar residues predominate over residues 11–27 (ETVSSPGQTELGSGFSN). Residues 28 to 41 (KQERSGFDGEDCWR) show a composition bias toward basic and acidic residues. In terms of domain architecture, QLQ spans 133-168 (PFSLTQWAELEQQALIYKYITANVPVPSSLLLSLKK). The 45-residue stretch at 196–240 (DPEPGRCRRTDGKKWRCSRDAVPDQKYCERHINRGRHRSRKPVEG) folds into the WRC domain. 2 short sequence motifs (bipartite nuclear localization signal) span residues 201–211 (RCRRTDGKKWR) and 229–236 (RGRHRSRK). 2 disordered regions span residues 223-250 (CERH…NAAA) and 485-530 (STFG…APSL). Positions 485–508 (STFGSLSNSSSASSTIIGDNNNKN) are enriched in low complexity. Residues 519–530 (TLMNTSATAPSL) show a composition bias toward polar residues.

This sequence belongs to the GRF family. As to quaternary structure, interacts with GIF1 and GIF2. Strongly expressed in actively growing and developing tissues, such as roots, upper stems, and shoot tips containing the shoot apical meristem (SAM) and flower buds. Also expressed in mature flowers, but weakly expressed in mature stems and leaves.

It is found in the nucleus. In terms of biological role, transcription activator that plays a role in the regulation of cell expansion in leaf and cotyledons tissues. Component of a network formed by miR396, the GRFs and their interacting factors (GIFs) acting in the regulation of meristem function, at least partially through the control of cell proliferation. microRNA396-GRF1/GRF3 regulatory module acts as a developmental regulator in the reprogramming of root cells during cyst nematode infection, leading to the formation of the syncytium. The sequence is that of Growth-regulating factor 1 (GRF1) from Arabidopsis thaliana (Mouse-ear cress).